We begin with the raw amino-acid sequence, 155 residues long: MKIKIICFGKLDKAFYVDAFNDYFKRLKKYVDLEIIELKEEINGELNKIKDENSNLLLKKLENYKDFEKIILDVNSKLISTENLVEIIKTNLNYKTAKILFVIGPSDGYSKSFLNSFTNKFSLAKITLPHQLCRIVLIEQIYRVFKIINNEKYHK.

Residues L72, G104, and 123 to 128 each bind S-adenosyl-L-methionine; that span reads LAKITL.

The protein belongs to the RNA methyltransferase RlmH family. In terms of assembly, homodimer.

Its subcellular location is the cytoplasm. The enzyme catalyses pseudouridine(1915) in 23S rRNA + S-adenosyl-L-methionine = N(3)-methylpseudouridine(1915) in 23S rRNA + S-adenosyl-L-homocysteine + H(+). Functionally, specifically methylates the pseudouridine at position 1915 (m3Psi1915) in 23S rRNA. The polypeptide is Ribosomal RNA large subunit methyltransferase H (Mycoplasma capricolum subsp. capricolum (strain California kid / ATCC 27343 / NCTC 10154)).